The primary structure comprises 163 residues: Nucleotide-binding protein Asuc_2113 (163 aa).

This sequence belongs to the YajQ family.

Functionally, nucleotide-binding protein. This is Nucleotide-binding protein Asuc_2113 from Actinobacillus succinogenes (strain ATCC 55618 / DSM 22257 / CCUG 43843 / 130Z).